A 315-amino-acid chain; its full sequence is tRNA wybutosine-synthesizing protein 5 (315 aa).

A JmjC domain is found at 102 to 267; the sequence is DEKYYLRSLG…YDTTDTYGNK (166 aa). Tyr-106 is a 2-oxoglutarate binding site. Residues His-160 and Asp-162 each contribute to the Fe cation site. 2-oxoglutarate-binding residues include Asn-166 and Lys-175. Fe cation is bound at residue His-235.

The protein belongs to the TYW5 family. As to quaternary structure, homodimer. Requires Fe(2+) as cofactor.

The catalysed reaction is 7-[(3S)-3-amino-3-carboxypropyl]wyosine(37) in tRNA(Phe) + 2-oxoglutarate + O2 = 7-(2-hydroxy-3-amino-3-carboxypropyl)wyosine(37) in tRNA(Phe) + succinate + CO2. It participates in tRNA modification; wybutosine-tRNA(Phe) biosynthesis. Functionally, tRNA hydroxylase that acts as a component of the wybutosine biosynthesis pathway. Wybutosine is a hyper modified guanosine with a tricyclic base found at the 3'-position adjacent to the anticodon of eukaryotic phenylalanine tRNA. Catalyzes the hydroxylation of 7-(a-amino-a-carboxypropyl)wyosine (yW-72) into undermodified hydroxywybutosine (OHyW*). OHyW* being further transformed into hydroxywybutosine (OHyW) by LCMT2/TYW4. OHyW is a derivative of wybutosine found in higher eukaryotes. The chain is tRNA wybutosine-synthesizing protein 5 (Tyw5) from Mus musculus (Mouse).